The sequence spans 282 residues: Elongation factor Ts (282 aa).

Residues 79–82 (TDFV) are involved in Mg(2+) ion dislocation from EF-Tu.

Belongs to the EF-Ts family.

It is found in the cytoplasm. Functionally, associates with the EF-Tu.GDP complex and induces the exchange of GDP to GTP. It remains bound to the aminoacyl-tRNA.EF-Tu.GTP complex up to the GTP hydrolysis stage on the ribosome. The protein is Elongation factor Ts of Colwellia psychrerythraea (strain 34H / ATCC BAA-681) (Vibrio psychroerythus).